Consider the following 299-residue polypeptide: Lymphocyte antigen 6 complex locus protein G6f (299 aa).

The first 19 residues, 1-19 (MAVLFLLLLFLCGLPQAET), serve as a signal peptide directing secretion. Residues 20–124 (DSIQAIYVVL…YRYQNWRVYD (105 aa)) enclose the Ig-like V-type domain. Topologically, residues 20–237 (DSIQAIYVVL…APSADWDVAW (218 aa)) are extracellular. A disulfide bond links C37 and C108. An N-linked (GlcNAc...) asparagine glycan is attached at N90. The helical transmembrane segment at 238–258 (ILTLLLTVGQGFTIVVLGVML) threads the bilayer. Topologically, residues 259-299 (WRQRAQGAQHRNASFPQFKPEIQVYENIHLAHLSPPAPKTR) are cytoplasmic. Residue Y283 is modified to Phosphotyrosine.

As to quaternary structure, homodimer; disulfide-linked. Interacts with GRB2 and GRB7 in a phosphorylation-dependent manner. Post-translationally, N-glycosylated.

The protein localises to the cell membrane. Functionally, may play a role in the downstream signal transduction pathways involving GRB2 and GRB7. The sequence is that of Lymphocyte antigen 6 complex locus protein G6f (LY6G6F) from Bos taurus (Bovine).